The sequence spans 166 residues: Xanthine-guanine phosphoribosyltransferase (166 aa).

5-phospho-alpha-D-ribose 1-diphosphate contacts are provided by residues 42–43 (RG) and 99–107 (DDLTDTGKT). Aspartate 100 contributes to the Mg(2+) binding site. Residues aspartate 103 and isoleucine 146 each coordinate guanine. Xanthine-binding residues include aspartate 103 and isoleucine 146. Residues 103 to 107 (DTGKT) and 145 to 146 (WI) each bind GMP.

Belongs to the purine/pyrimidine phosphoribosyltransferase family. XGPT subfamily. In terms of assembly, homotetramer. Mg(2+) is required as a cofactor.

The protein resides in the cell inner membrane. The catalysed reaction is GMP + diphosphate = guanine + 5-phospho-alpha-D-ribose 1-diphosphate. It carries out the reaction XMP + diphosphate = xanthine + 5-phospho-alpha-D-ribose 1-diphosphate. It catalyses the reaction IMP + diphosphate = hypoxanthine + 5-phospho-alpha-D-ribose 1-diphosphate. It functions in the pathway purine metabolism; GMP biosynthesis via salvage pathway; GMP from guanine: step 1/1. Its pathway is purine metabolism; XMP biosynthesis via salvage pathway; XMP from xanthine: step 1/1. Functionally, purine salvage pathway enzyme that catalyzes the transfer of the ribosyl-5-phosphate group from 5-phospho-alpha-D-ribose 1-diphosphate (PRPP) to the N9 position of the 6-oxopurines guanine and xanthine to form the corresponding ribonucleotides GMP (guanosine 5'-monophosphate) and XMP (xanthosine 5'-monophosphate), with the release of PPi. To a lesser extent, also acts on hypoxanthine. This chain is Xanthine-guanine phosphoribosyltransferase, found in Mesorhizobium japonicum (strain LMG 29417 / CECT 9101 / MAFF 303099) (Mesorhizobium loti (strain MAFF 303099)).